Here is a 303-residue protein sequence, read N- to C-terminus: ATP synthase gamma chain (303 aa).

The protein belongs to the ATPase gamma chain family. As to quaternary structure, F-type ATPases have 2 components, CF(1) - the catalytic core - and CF(0) - the membrane proton channel. CF(1) has five subunits: alpha(3), beta(3), gamma(1), delta(1), epsilon(1). CF(0) has three main subunits: a, b and c.

Its subcellular location is the cell inner membrane. In terms of biological role, produces ATP from ADP in the presence of a proton gradient across the membrane. The gamma chain is believed to be important in regulating ATPase activity and the flow of protons through the CF(0) complex. This Bartonella quintana (strain Toulouse) (Rochalimaea quintana) protein is ATP synthase gamma chain.